A 289-amino-acid polypeptide reads, in one-letter code: RING-H2 finger protein ATL30 (289 aa).

A helical membrane pass occupies residues 26 to 46 (VIILTVILLVVFFIGFFAIYF). The RING-type; atypical zinc-finger motif lies at 114–157 (CAICLLEFEEEHILLRLLTTCYHVFHQECIDQWLESNKTCPVCR). The segment at 181–206 (HENRDQEQTSTSNEVMLSRQSSGNNE) is disordered. Residues 188–204 (QTSTSNEVMLSRQSSGN) show a composition bias toward polar residues.

It belongs to the RING-type zinc finger family. ATL subfamily.

It is found in the membrane. The enzyme catalyses S-ubiquitinyl-[E2 ubiquitin-conjugating enzyme]-L-cysteine + [acceptor protein]-L-lysine = [E2 ubiquitin-conjugating enzyme]-L-cysteine + N(6)-ubiquitinyl-[acceptor protein]-L-lysine.. Its pathway is protein modification; protein ubiquitination. This is RING-H2 finger protein ATL30 (ATL30) from Arabidopsis thaliana (Mouse-ear cress).